Reading from the N-terminus, the 526-residue chain is Serine/threonine-protein kinase ppk22 (526 aa).

2 disordered regions span residues 1–24 (MARETEFNDKSPSSTDDGMSQSHF) and 39–106 (AATV…PRPL). Residues 10 to 23 (KSPSSTDDGMSQSH) are compositionally biased toward polar residues. A compositionally biased stretch (low complexity) spans 65 to 78 (NQLNELDLNDSSDQ). A Phosphoserine modification is found at S154. The Protein kinase domain occupies 155–445 (FEKIRLLGQG…ASDIKQHPFF (291 aa)). ATP is bound by residues 161 to 169 (LGQGDVGKV) and K184. D280 acts as the Proton acceptor in catalysis. A Phosphothreonine modification is found at T339. The residue at position 341 (S341) is a Phosphoserine. Y348 is modified (phosphotyrosine). Residues 446–526 (RHIQWALLRS…SVTLHHAGDE (81 aa)) form the AGC-kinase C-terminal domain. Residues 499 to 526 (MHSSTPVNEQSNPFDSFSSVTLHHAGDE) form a disordered region. Over residues 500–519 (HSSTPVNEQSNPFDSFSSVT) the composition is skewed to polar residues.

Belongs to the protein kinase superfamily. AGC Ser/Thr protein kinase family.

The protein resides in the cytoplasm. It catalyses the reaction L-seryl-[protein] + ATP = O-phospho-L-seryl-[protein] + ADP + H(+). The enzyme catalyses L-threonyl-[protein] + ATP = O-phospho-L-threonyl-[protein] + ADP + H(+). The polypeptide is Serine/threonine-protein kinase ppk22 (ppk22) (Schizosaccharomyces pombe (strain 972 / ATCC 24843) (Fission yeast)).